The primary structure comprises 377 residues: Chaperone protein DnaJ (377 aa).

The J domain maps to 5 to 69; the sequence is DYYEVLGVSK…NKRANYDQFG (65 aa). The CR-type zinc-finger motif lies at 134–216; sequence GTEKEISIRK…CHGKGTETKN (83 aa). 8 residues coordinate Zn(2+): Cys-147, Cys-150, Cys-164, Cys-167, Cys-190, Cys-193, Cys-204, and Cys-207. CXXCXGXG motif repeat units follow at residues 147 to 154, 164 to 171, 190 to 197, and 204 to 211; these read CETCDGSG, CHYCNGSG, CPVCNGTG, and CPTCHGKG.

Belongs to the DnaJ family. In terms of assembly, homodimer. The cofactor is Zn(2+).

It is found in the cytoplasm. Its function is as follows. Participates actively in the response to hyperosmotic and heat shock by preventing the aggregation of stress-denatured proteins and by disaggregating proteins, also in an autonomous, DnaK-independent fashion. Unfolded proteins bind initially to DnaJ; upon interaction with the DnaJ-bound protein, DnaK hydrolyzes its bound ATP, resulting in the formation of a stable complex. GrpE releases ADP from DnaK; ATP binding to DnaK triggers the release of the substrate protein, thus completing the reaction cycle. Several rounds of ATP-dependent interactions between DnaJ, DnaK and GrpE are required for fully efficient folding. Also involved, together with DnaK and GrpE, in the DNA replication of plasmids through activation of initiation proteins. The chain is Chaperone protein DnaJ from Staphylococcus carnosus (strain TM300).